The sequence spans 146 residues: Acireductone dioxygenase (146 aa).

Fe(2+) is bound by residues His-71, His-73, Glu-77, and His-116. Ni(2+) contacts are provided by His-71, His-73, Glu-77, and His-116.

The protein belongs to the acireductone dioxygenase (ARD) family. Fe(2+) serves as cofactor. Ni(2+) is required as a cofactor.

The protein localises to the cytoplasm. The protein resides in the nucleus. The enzyme catalyses 1,2-dihydroxy-5-(methylsulfanyl)pent-1-en-3-one + O2 = 4-methylsulfanyl-2-oxobutanoate + formate + 2 H(+). It carries out the reaction 1,2-dihydroxy-5-(methylsulfanyl)pent-1-en-3-one + O2 = 3-(methylsulfanyl)propanoate + CO + formate + 2 H(+). The protein operates within amino-acid biosynthesis; L-methionine biosynthesis via salvage pathway; L-methionine from S-methyl-5-thio-alpha-D-ribose 1-phosphate: step 5/6. Functionally, catalyzes 2 different reactions between oxygen and the acireductone 1,2-dihydroxy-3-keto-5-methylthiopentene (DHK-MTPene) depending upon the metal bound in the active site. Fe-containing acireductone dioxygenase (Fe-ARD) produces formate and 2-keto-4-methylthiobutyrate (KMTB), the alpha-ketoacid precursor of methionine in the methionine recycle pathway. Ni-containing acireductone dioxygenase (Ni-ARD) produces methylthiopropionate, carbon monoxide and formate, and does not lie on the methionine recycle pathway. The sequence is that of Acireductone dioxygenase from Heterostelium pallidum (strain ATCC 26659 / Pp 5 / PN500) (Cellular slime mold).